Here is a 776-residue protein sequence, read N- to C-terminus: LPS-assembly protein LptD (776 aa).

An N-terminal signal peptide occupies residues 1–24 (MQHFSRTFLAASIATALFAPYAQA).

Belongs to the LptD family. Component of the lipopolysaccharide transport and assembly complex. Interacts with LptE and LptA.

The protein localises to the cell outer membrane. Functionally, together with LptE, is involved in the assembly of lipopolysaccharide (LPS) at the surface of the outer membrane. The polypeptide is LPS-assembly protein LptD (Vibrio vulnificus (strain CMCP6)).